Consider the following 592-residue polypeptide: Inactive metallocarboxypeptidase ecm14 (592 aa).

The first 22 residues, 1–22 (MYRQDHVFVVLCAVLLAGQVTA), serve as a signal peptide directing secretion. A propeptide spanning residues 23–175 (VPAGTGINPH…AIYESRYPTR (153 aa)) is cleaved from the precursor. The Peptidase M14 domain maps to 203 to 524 (HYQPFNVILQ…NSVLVLGHFL (322 aa)). Positions 267 and 270 each coordinate Zn(2+). Residues 267-270 (HARE), Arg325, and 342-343 (DR) contribute to the substrate site. Cys336 and Cys359 are oxidised to a cystine. The N-linked (GlcNAc...) asparagine glycan is linked to Asn383. Position 399 (His399) interacts with Zn(2+). 400 to 401 (SY) lines the substrate pocket. A glycan (N-linked (GlcNAc...) asparagine) is linked at Asn548.

Belongs to the peptidase M14 family. The cofactor is Zn(2+).

Its subcellular location is the vacuole. It localises to the secreted. Its function is as follows. Inactive carboxypeptidase that may play a role in cell wall organization and biogenesis. The sequence is that of Inactive metallocarboxypeptidase ecm14 (ecm14) from Talaromyces stipitatus (strain ATCC 10500 / CBS 375.48 / QM 6759 / NRRL 1006) (Penicillium stipitatum).